Consider the following 454-residue polypeptide: Inner membrane transport protein YajR (454 aa).

At 1–14 the chain is on the periplasmic side; that stretch reads MNDYKMTPGERRAT. Residues 15-35 form a helical membrane-spanning segment; sequence WGLGTVFSLRMLGMFMVLPVL. The Cytoplasmic portion of the chain corresponds to 36 to 47; that stretch reads TTYGMALQGASE. A helical membrane pass occupies residues 48–68; sequence ALIGIAIGIYGLTQAVFQIPF. At 69 to 84 the chain is on the periplasmic side; that stretch reads GLLSDRIGRKPLIVGG. The chain crosses the membrane as a helical span at residues 85–105; that stretch reads LAVFAAGSVIAALSDSIWGII. Topologically, residues 106 to 137 are cytoplasmic; it reads LGRALQGSGAIAAAVMALLSDLTREQNRTKAM. Residues 138–158 form a helical membrane-spanning segment; that stretch reads AFIGVSFGITFAIAMVLGPII. The Periplasmic segment spans residues 159-165; that stretch reads THKLGLH. Residues 166-186 form a helical membrane-spanning segment; the sequence is ALFWMIAILATTGIALTIWVV. Residues 187 to 216 are Cytoplasmic-facing; it reads PNSSTHVLNRESGMVKGSFSKVLAEPRLLK. Residues 217–237 form a helical membrane-spanning segment; it reads LNFGIMCLHILLMSTFVALPG. Residues 238–252 lie on the Periplasmic side of the membrane; that stretch reads QLADAGFPAAEHWKV. A helical transmembrane segment spans residues 253–273; that stretch reads YLATMLIAFGSVVPFIIYAEV. Residues 274–279 lie on the Cytoplasmic side of the membrane; the sequence is KRKMKQ. The helical transmembrane segment at 280-300 threads the bilayer; that stretch reads VFVFCVGLIVVAEIVLWNAQT. At 301–306 the chain is on the periplasmic side; it reads QFWQLV. The chain crosses the membrane as a helical span at residues 307-327; the sequence is VGVQLFFVAFNLMEALLPSLI. Over 328 to 340 the chain is Cytoplasmic; it reads SKESPAGYKGTAM. The helical transmembrane segment at 341-361 threads the bilayer; the sequence is GVYSTSQFLGVAIGGSLGGWI. The Periplasmic portion of the chain corresponds to 362–363; that stretch reads NG. Residues 364–384 form a helical membrane-spanning segment; the sequence is MFDGQGVFLAGAMLAAVWLTV. The Cytoplasmic segment spans residues 385–454; that stretch reads ASTMKEPPYV…FEIEQAIRQA (70 aa).

Belongs to the major facilitator superfamily.

It is found in the cell inner membrane. The polypeptide is Inner membrane transport protein YajR (yajR) (Escherichia coli (strain K12)).